The following is a 175-amino-acid chain: Zinc finger A20 and AN1 domain-containing stress-associated protein 7 (175 aa).

Residues 13-47 form an A20-type zinc finger; the sequence is PTEPKLCDNGCGFFGSPSNMNLCSKCYRSLRAEED. Zn(2+) contacts are provided by Cys-19, Cys-23, Cys-35, Cys-38, Cys-116, Cys-119, Cys-130, Cys-132, Cys-137, His-140, His-146, and Cys-148. The segment at 110 to 156 adopts an AN1-type zinc-finger fold; that stretch reads VRPNNRCFSCNKKVGVMGFKCKCGSTFCGSHRYPEKHECSFDFKEVG.

Functionally, may be involved in environmental stress response. The chain is Zinc finger A20 and AN1 domain-containing stress-associated protein 7 (SAP7) from Arabidopsis thaliana (Mouse-ear cress).